We begin with the raw amino-acid sequence, 1755 residues long: MESQQLSNYPHISHGSACASVTSKEVHTNQDPLDVSASKIQEYDKASTKANSQQTTTPASSAVPENPHHASPQPASVPPPQNGPYPQQCMMTQNQANPSGWSFYGHPSMIPYTPYQMSPMYFPPGPQSQFPQYPSSVGTPLSTPSPESGNTFTDSSSADSDMTSTKKYVRPPPMLTSPNDFPNWVKTYIKFLQNSNLGGIIPTVNGKPVRQITDDELTFLYNTFQIFAPSQFLPTWVKDILSVDYTDIMKILSKSIEKMQSDTQEANDIVTLANLQYNGSTPADAFETKVTNIIDRLNNNGIHINNKVACQLIMRGLSGEYKFLRYTRHRHLNMTVAELFLDIHAIYEEQQGSRNSKPNYRRNPSDEKNDSRSYTNTTKPKVIARNPQKTNNSKSKTARAHNVSTSNNSPSTDNDSISKSTTEPIQLNNKHDLHLGQELTESTVNHTNHSDDELPGHLLLDSGASRTLIRSAHHIHSASSNPGINVVDAQKRNIPINAIGDLQFHFQDNTKTSIKVLHTPNIAYDLLSLNELAAVDITACFTKNVLERSDGTVLAPIVKYGDFYWVSKKYLLPSNISVPTINNVHTSESTRKYPYPFIHRMLAHANAQTIRYSLKNNTITYFNESDVDWSSAIDYQCPDCLIGKSTKHRHIKGSRLKYQNSYEPFQYLHTDIFGPVHNLPNSAPSYFISFTDETTKFRWVYPLHDRREDSILDVFTTILAFIKNQFQASVLVIQMDRGSEYTNRTLHKFLEKNGITPCYTTTADSRAHGVAERLNRTLLDDCRTQLQCSGLPNHLWFSAIEFSTIVRNSLASPKSKKSARQHAGLAGLDISTLLPFGQPVIVNDHNPNSKIHPRGIPGYALHPSRNSYGYIIYLPSLKKTVDTTNYVILQGKESRLDQFNYDALTFDEDLNRLTASYHSFIASNEIQESNDLNIESDHDFQSDIELHPEQPRNVLSKAVSPTDSTPPSTHTEDSKRVSKTNIRAPREVDPNISESNILPSKKRSSTPQISNIESTGSGGMHKLNVPLLAPMSQSNTHESSHASKSKDFRHSDSYSENETNHTNVPISSTGGTNNKTVPQISDQETEKRIIHRSPSIDASPPENNSSHNIVPIKTPTTVSEQNTEESIIADLPLPDLPPESPTEFPDPFKELPPINSHQTNSSLGGIGDSNAYTTINSKKRSLEDNETEIKVSRDTWNTKNMRSLEPPRSKKRIHLIAAVKAVKSIKPIRTTLRYDEAITYNKDIKEKEKYIEAYHKEVNQLLKMNTWDTDKYYDRKEIDPKRVINSMFIFNRKRDGTHKARFVARGDIQHPDTYDSGMQSNTVHHYALMTSLSLALDNNYYITQLDISSAYLYADIKEELYIRPPPHLGMNDKLIRLKKSLYGLKQSGANWYETIKSYLIKQCGMEEVRGWSCVFKNSQVTICLFVDDMILFSKDLNANKKIITTLKKQYDTKIINLGEGDNEIQYDILGLEIKYQRSKYMKLGMEKSLTEKLPKLNVPLNPKGKKLRAPGQPGHYIDQDELEIDEDEYKEKVHEMQKLIGLASYVGYKFRFDLLYYINTLAQHILFPSRQVLDMTYELIQFMWDTRDKQLIWHKNKPTKPDNKLVAISDASYGNQPYYKSQIGNIFLLNGKVIGGKSTKASLTCTSTTEAEIHAVSEAIPLLNNLSHLVQELNKKPIIKGSLTDSRSTISIIKSTNEEKFRNRFFGTKAMRLRDEVSGNNLYVYYIETKKNIADVMTKPLPIKTFKLLTNKWIH.

Composition is skewed to polar residues over residues 1 to 10 (MESQQLSNYP), 48 to 60 (TKAN…TPAS), and 127 to 152 (QSQF…GNTF). Disordered regions lie at residues 1-93 (MESQ…MMTQ), 126-173 (PQSQ…RPPP), and 352-421 (GSRN…SKST). Residues 153-165 (TDSSSADSDMTST) are compositionally biased toward low complexity. The segment at 299-401 (NNGIHINNKV…NSKSKTARAH (103 aa)) is RNA-binding. Positions 402 to 418 (NVSTSNNSPSTDNDSIS) are enriched in low complexity. Phosphoserine is present on S416. Residue D461 is the For protease activity; shared with dimeric partner of the active site. The tract at residues 583–640 (NVHTSESTRKYPYPFIHRMLAHANAQTIRYSLKNNTITYFNESDVDWSSAIDYQCPDC) is integrase-type zinc finger-like. Positions 660–835 (NSYEPFQYLH…AGLDISTLLP (176 aa)) constitute an Integrase catalytic domain. Mg(2+)-binding residues include D671 and D736. Disordered regions lie at residues 956-1087 (SKAV…ETEK), 1092-1111 (RSPS…NIVP), and 1130-1187 (DLPL…DNET). A compositionally biased stretch (low complexity) spans 960–969 (SPTDSTPPST). Over residues 1005–1015 (STPQISNIEST) the composition is skewed to polar residues. A compositionally biased stretch (basic and acidic residues) spans 1038–1053 (ESSHASKSKDFRHSDS). Polar residues-rich tracts occupy residues 1054–1082 (YSEN…QISD) and 1101–1111 (PENNSSHNIVP). Positions 1178–1212 (KKRSLEDNETEIKVSRDTWNTKNMRSLEPPRSKKR) match the Bipartite nuclear localization signal motif. In terms of domain architecture, Reverse transcriptase Ty1/copia-type spans 1338–1476 (NNYYITQLDI…DILGLEIKYQ (139 aa)). The Mg(2+) site is built by D1346, D1427, D1428, D1610, E1652, and D1685. Positions 1610-1752 (DASYGNQPYY…IKTFKLLTNK (143 aa)) constitute an RNase H Ty1/copia-type domain.

In terms of assembly, the capsid protein forms a homotrimer, from which the VLPs are assembled. The protease is a homodimer, whose active site consists of two apposed aspartic acid residues. Post-translationally, initially, virus-like particles (VLPs) are composed of the structural unprocessed proteins Gag and Gag-Pol, and also contain the host initiator methionine tRNA (tRNA(i)-Met) which serves as a primer for minus-strand DNA synthesis, and a dimer of genomic Ty RNA. Processing of the polyproteins occurs within the particle and proceeds by an ordered pathway, called maturation. First, the protease (PR) is released by autocatalytic cleavage of the Gag-Pol polyprotein yielding capsid protein p45 and a Pol-p154 precursor protein. This cleavage is a prerequisite for subsequent processing of Pol-p154 at the remaining sites to release the mature structural and catalytic proteins. Maturation takes place prior to the RT reaction and is required to produce transposition-competent VLPs.

It localises to the cytoplasm. Its subcellular location is the nucleus. The catalysed reaction is DNA(n) + a 2'-deoxyribonucleoside 5'-triphosphate = DNA(n+1) + diphosphate. The enzyme catalyses Endonucleolytic cleavage to 5'-phosphomonoester.. Its function is as follows. Capsid protein (CA) is the structural component of the virus-like particle (VLP), forming the shell that encapsulates the retrotransposons dimeric RNA genome. The particles are assembled from trimer-clustered units and there are holes in the capsid shells that allow for the diffusion of macromolecules. CA also has nucleocapsid-like chaperone activity, promoting primer tRNA(i)-Met annealing to the multipartite primer-binding site (PBS), dimerization of Ty1 RNA and initiation of reverse transcription. Functionally, the aspartyl protease (PR) mediates the proteolytic cleavages of the Gag and Gag-Pol polyproteins after assembly of the VLP. In terms of biological role, reverse transcriptase/ribonuclease H (RT) is a multifunctional enzyme that catalyzes the conversion of the retro-elements RNA genome into dsDNA within the VLP. The enzyme displays a DNA polymerase activity that can copy either DNA or RNA templates, and a ribonuclease H (RNase H) activity that cleaves the RNA strand of RNA-DNA heteroduplexes during plus-strand synthesis and hydrolyzes RNA primers. The conversion leads to a linear dsDNA copy of the retrotransposon that includes long terminal repeats (LTRs) at both ends. Integrase (IN) targets the VLP to the nucleus, where a subparticle preintegration complex (PIC) containing at least integrase and the newly synthesized dsDNA copy of the retrotransposon must transit the nuclear membrane. Once in the nucleus, integrase performs the integration of the dsDNA into the host genome. This Saccharomyces cerevisiae (strain ATCC 204508 / S288c) (Baker's yeast) protein is Transposon Ty1-DR1 Gag-Pol polyprotein (TY1B-DR1).